Here is a 200-residue protein sequence, read N- to C-terminus: Holliday junction resolvase RecU (200 aa).

Residues 1–24 form a disordered region; the sequence is MTIRYPNGKRYDQASQPHKTPIKK. Residues T85, D87, E100, and Q119 each contribute to the Mg(2+) site.

This sequence belongs to the RecU family. It depends on Mg(2+) as a cofactor.

The protein localises to the cytoplasm. The catalysed reaction is Endonucleolytic cleavage at a junction such as a reciprocal single-stranded crossover between two homologous DNA duplexes (Holliday junction).. In terms of biological role, endonuclease that resolves Holliday junction intermediates in genetic recombination. Cleaves mobile four-strand junctions by introducing symmetrical nicks in paired strands. Promotes annealing of linear ssDNA with homologous dsDNA. Required for DNA repair, homologous recombination and chromosome segregation. This chain is Holliday junction resolvase RecU, found in Bacillus mycoides (strain KBAB4) (Bacillus weihenstephanensis).